A 277-amino-acid chain; its full sequence is Large ribosomal subunit protein uL2 (277 aa).

Residues 219–277 are disordered; sequence TVRGSVMNPNDHPHGGGEGRSPIGHPSPRTPWGKPALGYKTRKNKKYSDRFIVKRRHDK.

The protein belongs to the universal ribosomal protein uL2 family. In terms of assembly, part of the 50S ribosomal subunit. Forms a bridge to the 30S subunit in the 70S ribosome.

One of the primary rRNA binding proteins. Required for association of the 30S and 50S subunits to form the 70S ribosome, for tRNA binding and peptide bond formation. It has been suggested to have peptidyltransferase activity; this is somewhat controversial. Makes several contacts with the 16S rRNA in the 70S ribosome. In Clostridium botulinum (strain Okra / Type B1), this protein is Large ribosomal subunit protein uL2.